The following is a 358-amino-acid chain: Peroxidase 54 (358 aa).

The first 31 residues, 1–31 (MAVTSSSSTCDGFFIISLIVIVSSLFGTSSA), serve as a signal peptide directing secretion. Residue glutamine 32 is modified to Pyrrolidone carboxylic acid. Asparagine 34 and asparagine 44 each carry an N-linked (GlcNAc...) asparagine glycan. Disulfide bonds link cysteine 42-cysteine 122, cysteine 75-cysteine 80, cysteine 128-cysteine 330, and cysteine 207-cysteine 239. The Proton acceptor role is filled by histidine 73. Ca(2+) contacts are provided by aspartate 74, valine 77, glycine 79, aspartate 81, and serine 83. Residues asparagine 103, asparagine 161, and asparagine 166 are each glycosylated (N-linked (GlcNAc...) asparagine). Proline 170 contacts substrate. N-linked (GlcNAc...) asparagine glycosylation is present at asparagine 178. Histidine 200 lines the heme b pocket. Threonine 201 is a Ca(2+) binding site. Asparagine 218, asparagine 228, and asparagine 242 each carry an N-linked (GlcNAc...) asparagine glycan. Residues aspartate 252, threonine 255, and aspartate 260 each coordinate Ca(2+). N-linked (GlcNAc...) asparagine glycosylation occurs at asparagine 298.

This sequence belongs to the peroxidase family. Classical plant (class III) peroxidase subfamily. It depends on heme b as a cofactor. The cofactor is Ca(2+).

It localises to the secreted. Its subcellular location is the vacuole. It catalyses the reaction 2 a phenolic donor + H2O2 = 2 a phenolic radical donor + 2 H2O. In terms of biological role, removal of H(2)O(2), oxidation of toxic reductants, biosynthesis and degradation of lignin, suberization, auxin catabolism, response to environmental stresses such as wounding, pathogen attack and oxidative stress. These functions might be dependent on each isozyme/isoform in each plant tissue. The sequence is that of Peroxidase 54 (PER54) from Arabidopsis thaliana (Mouse-ear cress).